The sequence spans 250 residues: 5'-nucleotidase SurE (250 aa).

Aspartate 8, aspartate 9, serine 39, and asparagine 95 together coordinate a divalent metal cation.

Belongs to the SurE nucleotidase family. Requires a divalent metal cation as cofactor.

Its subcellular location is the cytoplasm. The catalysed reaction is a ribonucleoside 5'-phosphate + H2O = a ribonucleoside + phosphate. Functionally, nucleotidase that shows phosphatase activity on nucleoside 5'-monophosphates. The polypeptide is 5'-nucleotidase SurE (Cupriavidus taiwanensis (strain DSM 17343 / BCRC 17206 / CCUG 44338 / CIP 107171 / LMG 19424 / R1) (Ralstonia taiwanensis (strain LMG 19424))).